Consider the following 276-residue polypeptide: 3-methyl-2-oxobutanoate hydroxymethyltransferase (276 aa).

Residues aspartate 50 and aspartate 89 each contribute to the Mg(2+) site. 3-methyl-2-oxobutanoate is bound by residues aspartate 50–serine 51, aspartate 89, and lysine 119. Residue glutamate 121 coordinates Mg(2+). Catalysis depends on glutamate 188, which acts as the Proton acceptor.

It belongs to the PanB family. As to quaternary structure, homodecamer; pentamer of dimers. The cofactor is Mg(2+).

The protein resides in the cytoplasm. It carries out the reaction 3-methyl-2-oxobutanoate + (6R)-5,10-methylene-5,6,7,8-tetrahydrofolate + H2O = 2-dehydropantoate + (6S)-5,6,7,8-tetrahydrofolate. Its pathway is cofactor biosynthesis; (R)-pantothenate biosynthesis; (R)-pantoate from 3-methyl-2-oxobutanoate: step 1/2. Its function is as follows. Catalyzes the reversible reaction in which hydroxymethyl group from 5,10-methylenetetrahydrofolate is transferred onto alpha-ketoisovalerate to form ketopantoate. In Paracoccus denitrificans (strain Pd 1222), this protein is 3-methyl-2-oxobutanoate hydroxymethyltransferase.